The following is a 252-amino-acid chain: 5'-nucleotidase SurE (252 aa).

4 residues coordinate a divalent metal cation: D8, D9, S40, and N92.

This sequence belongs to the SurE nucleotidase family. The cofactor is a divalent metal cation.

The protein resides in the cytoplasm. The enzyme catalyses a ribonucleoside 5'-phosphate + H2O = a ribonucleoside + phosphate. Its function is as follows. Nucleotidase that shows phosphatase activity on nucleoside 5'-monophosphates. The polypeptide is 5'-nucleotidase SurE (Mesorhizobium japonicum (strain LMG 29417 / CECT 9101 / MAFF 303099) (Mesorhizobium loti (strain MAFF 303099))).